We begin with the raw amino-acid sequence, 160 residues long: Putative pre-16S rRNA nuclease (160 aa).

This sequence belongs to the YqgF nuclease family.

Its subcellular location is the cytoplasm. Functionally, could be a nuclease involved in processing of the 5'-end of pre-16S rRNA. This Cereibacter sphaeroides (strain KD131 / KCTC 12085) (Rhodobacter sphaeroides) protein is Putative pre-16S rRNA nuclease.